The following is a 188-amino-acid chain: Ribosome-recycling factor (188 aa).

Belongs to the RRF family.

The protein localises to the cytoplasm. Functionally, responsible for the release of ribosomes from messenger RNA at the termination of protein biosynthesis. May increase the efficiency of translation by recycling ribosomes from one round of translation to another. The chain is Ribosome-recycling factor from Phenylobacterium zucineum (strain HLK1).